Reading from the N-terminus, the 361-residue chain is Peptide chain release factor 1 (361 aa).

Position 237 is an N5-methylglutamine (glutamine 237). A disordered region spans residues 285–306; that stretch reads QAEQSAQQTEQRRQLVGSGDRS.

It belongs to the prokaryotic/mitochondrial release factor family. Post-translationally, methylated by PrmC. Methylation increases the termination efficiency of RF1.

The protein localises to the cytoplasm. Peptide chain release factor 1 directs the termination of translation in response to the peptide chain termination codons UAG and UAA. The chain is Peptide chain release factor 1 from Alkalilimnicola ehrlichii (strain ATCC BAA-1101 / DSM 17681 / MLHE-1).